The following is a 379-amino-acid chain: Probable protein phosphatase 2C 46 (379 aa).

Positions 1-20 (MLSTLMKLLSACLWPSSSSG) are cleaved as a signal peptide. The PPM-type phosphatase domain occupies 42–353 (LVGEFSMAVV…DDITVVIIFL (312 aa)). Residue serine 73 is modified to Phosphoserine. Positions 84, 85, 285, and 344 each coordinate Mn(2+).

Belongs to the PP2C family. As to quaternary structure, interacts with SAUR19. It depends on Mg(2+) as a cofactor. Requires Mn(2+) as cofactor.

It catalyses the reaction O-phospho-L-seryl-[protein] + H2O = L-seryl-[protein] + phosphate. It carries out the reaction O-phospho-L-threonyl-[protein] + H2O = L-threonyl-[protein] + phosphate. In terms of biological role, may dephosphorylate and repress plasma membrane H(+)-ATPases (PM H(+)-ATPases, e.g. AHA1 and AHA2), thus influencing negatively plant growth and fitness. The chain is Probable protein phosphatase 2C 46 from Arabidopsis thaliana (Mouse-ear cress).